A 293-amino-acid polypeptide reads, in one-letter code: Formamidopyrimidine-DNA glycosylase (293 aa).

The Schiff-base intermediate with DNA role is filled by P2. E3 (proton donor) is an active-site residue. The active-site Proton donor; for beta-elimination activity is K58. The DNA site is built by H104, R123, and K166. The segment at 257-293 (AAYDREGERCRTDGCGGAVKRFVQNGRSTFWCSGCQK) adopts an FPG-type zinc-finger fold. The active-site Proton donor; for delta-elimination activity is the R283.

Belongs to the FPG family. As to quaternary structure, monomer. It depends on Zn(2+) as a cofactor.

The enzyme catalyses Hydrolysis of DNA containing ring-opened 7-methylguanine residues, releasing 2,6-diamino-4-hydroxy-5-(N-methyl)formamidopyrimidine.. It catalyses the reaction 2'-deoxyribonucleotide-(2'-deoxyribose 5'-phosphate)-2'-deoxyribonucleotide-DNA = a 3'-end 2'-deoxyribonucleotide-(2,3-dehydro-2,3-deoxyribose 5'-phosphate)-DNA + a 5'-end 5'-phospho-2'-deoxyribonucleoside-DNA + H(+). In terms of biological role, involved in base excision repair of DNA damaged by oxidation or by mutagenic agents. Acts as a DNA glycosylase that recognizes and removes damaged bases. Has a preference for oxidized purines, such as 7,8-dihydro-8-oxoguanine (8-oxoG). Has AP (apurinic/apyrimidinic) lyase activity and introduces nicks in the DNA strand. Cleaves the DNA backbone by beta-delta elimination to generate a single-strand break at the site of the removed base with both 3'- and 5'-phosphates. This is Formamidopyrimidine-DNA glycosylase from Rhodopseudomonas palustris (strain BisB5).